A 478-amino-acid chain; its full sequence is Protein nucleotidyltransferase YdiU (478 aa).

The ATP site is built by G84, G86, R87, K107, D119, G120, R170, and R177. The active-site Proton acceptor is the D246. Mg(2+)-binding residues include N247 and D256. D256 contacts ATP.

Belongs to the SELO family. Mg(2+) is required as a cofactor. Mn(2+) serves as cofactor.

It carries out the reaction L-seryl-[protein] + ATP = 3-O-(5'-adenylyl)-L-seryl-[protein] + diphosphate. It catalyses the reaction L-threonyl-[protein] + ATP = 3-O-(5'-adenylyl)-L-threonyl-[protein] + diphosphate. The enzyme catalyses L-tyrosyl-[protein] + ATP = O-(5'-adenylyl)-L-tyrosyl-[protein] + diphosphate. The catalysed reaction is L-histidyl-[protein] + UTP = N(tele)-(5'-uridylyl)-L-histidyl-[protein] + diphosphate. It carries out the reaction L-seryl-[protein] + UTP = O-(5'-uridylyl)-L-seryl-[protein] + diphosphate. It catalyses the reaction L-tyrosyl-[protein] + UTP = O-(5'-uridylyl)-L-tyrosyl-[protein] + diphosphate. Functionally, nucleotidyltransferase involved in the post-translational modification of proteins. It can catalyze the addition of adenosine monophosphate (AMP) or uridine monophosphate (UMP) to a protein, resulting in modifications known as AMPylation and UMPylation. The protein is Protein nucleotidyltransferase YdiU of Escherichia coli O139:H28 (strain E24377A / ETEC).